Reading from the N-terminus, the 428-residue chain is Adenylosuccinate synthetase (428 aa).

Residues 12-18 (GDEGKGK) and 40-42 (GHT) each bind GTP. The active-site Proton acceptor is Asp-13. 2 residues coordinate Mg(2+): Asp-13 and Gly-40. Residues 13 to 16 (DEGK), 38 to 41 (NAGH), Thr-128, Arg-142, Gln-223, Thr-238, and Arg-302 contribute to the IMP site. His-41 acts as the Proton donor in catalysis. Residue 298-304 (TTTGRPR) coordinates substrate. GTP-binding positions include Arg-304, 330-332 (KLD), and 412-414 (GVG).

This sequence belongs to the adenylosuccinate synthetase family. In terms of assembly, homodimer. Requires Mg(2+) as cofactor.

The protein localises to the cytoplasm. The enzyme catalyses IMP + L-aspartate + GTP = N(6)-(1,2-dicarboxyethyl)-AMP + GDP + phosphate + 2 H(+). It participates in purine metabolism; AMP biosynthesis via de novo pathway; AMP from IMP: step 1/2. Functionally, plays an important role in the de novo pathway of purine nucleotide biosynthesis. Catalyzes the first committed step in the biosynthesis of AMP from IMP. In Kineococcus radiotolerans (strain ATCC BAA-149 / DSM 14245 / SRS30216), this protein is Adenylosuccinate synthetase.